A 454-amino-acid chain; its full sequence is Guanine deaminase (454 aa).

Residues His-82 and His-84 each contribute to the Zn(2+) site. Substrate contacts are provided by residues 84–87 (HAPQ), 213–214 (RF), 240–243 (HISE), and Asp-330. 2 residues coordinate Zn(2+): His-240 and Asp-330. Ser-453 carries the post-translational modification Phosphoserine.

Belongs to the metallo-dependent hydrolases superfamily. ATZ/TRZ family. In terms of assembly, homodimer. Zn(2+) serves as cofactor.

The catalysed reaction is guanine + H2O + H(+) = xanthine + NH4(+). The protein operates within purine metabolism; guanine degradation; xanthine from guanine: step 1/1. Catalyzes the hydrolytic deamination of guanine, producing xanthine and ammonia. This chain is Guanine deaminase (Gda), found in Rattus norvegicus (Rat).